Here is a 232-residue protein sequence, read N- to C-terminus: 7-cyano-7-deazaguanine synthase (232 aa).

8–18 (FSGGQDSTTCL) provides a ligand contact to ATP. Zn(2+) contacts are provided by C189, C198, C201, and C204.

It belongs to the QueC family. Zn(2+) is required as a cofactor.

It catalyses the reaction 7-carboxy-7-deazaguanine + NH4(+) + ATP = 7-cyano-7-deazaguanine + ADP + phosphate + H2O + H(+). Its pathway is purine metabolism; 7-cyano-7-deazaguanine biosynthesis. Its function is as follows. Catalyzes the ATP-dependent conversion of 7-carboxy-7-deazaguanine (CDG) to 7-cyano-7-deazaguanine (preQ(0)). This is 7-cyano-7-deazaguanine synthase from Yersinia enterocolitica serotype O:8 / biotype 1B (strain NCTC 13174 / 8081).